A 154-amino-acid polypeptide reads, in one-letter code: Putative F-box protein At2g11200 (154 aa).

Positions 5 to 51 (TTAMSDLPRDLEEEVLSRVQLASLRAVRTTCKKWNRRLSKYRFTKKY) constitute an F-box domain.

The sequence is that of Putative F-box protein At2g11200 from Arabidopsis thaliana (Mouse-ear cress).